Consider the following 188-residue polypeptide: Elongation factor P (188 aa).

At Lys-34 the chain carries N6-(3,6-diaminohexanoyl)-5-hydroxylysine.

The protein belongs to the elongation factor P family. In terms of processing, may be beta-lysylated on the epsilon-amino group of Lys-34 by the combined action of EpmA and EpmB, and then hydroxylated on the C5 position of the same residue by EpmC (if this protein is present). Lysylation is critical for the stimulatory effect of EF-P on peptide-bond formation. The lysylation moiety may extend toward the peptidyltransferase center and stabilize the terminal 3-CCA end of the tRNA. Hydroxylation of the C5 position on Lys-34 may allow additional potential stabilizing hydrogen-bond interactions with the P-tRNA.

It is found in the cytoplasm. Its pathway is protein biosynthesis; polypeptide chain elongation. Functionally, involved in peptide bond synthesis. Alleviates ribosome stalling that occurs when 3 or more consecutive Pro residues or the sequence PPG is present in a protein, possibly by augmenting the peptidyl transferase activity of the ribosome. Modification of Lys-34 is required for alleviation. The sequence is that of Elongation factor P from Coxiella burnetii (strain CbuG_Q212) (Coxiella burnetii (strain Q212)).